The chain runs to 231 residues: Uracil phosphoribosyltransferase (231 aa).

A GTP-binding site is contributed by 38–42 (KGLVR). Residues Arg87, Arg112, and 140–148 (DPMIATGST) contribute to the 5-phospho-alpha-D-ribose 1-diphosphate site. Residues Ile203 and 208–210 (GDA) each bind uracil. A 5-phospho-alpha-D-ribose 1-diphosphate-binding site is contributed by Asp209.

This sequence belongs to the UPRTase family. The cofactor is Mg(2+).

The catalysed reaction is UMP + diphosphate = 5-phospho-alpha-D-ribose 1-diphosphate + uracil. It participates in pyrimidine metabolism; UMP biosynthesis via salvage pathway; UMP from uracil: step 1/1. Allosterically activated by GTP. Its function is as follows. Catalyzes the conversion of uracil and 5-phospho-alpha-D-ribose 1-diphosphate (PRPP) to UMP and diphosphate. This Methanococcus maripaludis (strain C5 / ATCC BAA-1333) protein is Uracil phosphoribosyltransferase.